Here is an 802-residue protein sequence, read N- to C-terminus: Epithelial sodium channel subunit delta (802 aa).

Topologically, residues 1–250 (MRAVLSQKTT…CSRGNRLKTT (250 aa)) are cytoplasmic. The interval 145 to 211 (KQPHGGALTS…PPPPKEGHQE (67 aa)) is disordered. The segment covering 166–176 (CHLKGWQHRPT) has biased composition (basic residues). Pro residues predominate over residues 192–205 (PPRPGPPSAPPPPP). The chain crosses the membrane as a helical span at residues 251–271 (SWGLLSLGALVALCWQLGLLF). Topologically, residues 272–694 (ERHWHRPVLM…VPQLLSAMGS (423 aa)) are extracellular. N-linked (GlcNAc...) asparagine glycans are attached at residues N330 and N548. Residues 695-715 (LCSLWFGASVLSLLELLELLL) form a helical membrane-spanning segment. Residues 716-802 (DASALTLVLG…GPQPLETLDT (87 aa)) are Cytoplasmic-facing. The tract at residues 738–777 (RASPASGASSIKPEASQMPPPAGGTSDDPEPSGPHLPRVM) is disordered.

It belongs to the amiloride-sensitive sodium channel (TC 1.A.6) family. SCNN1D subfamily. As to quaternary structure, can form an alternative heterotrimeric epithelial sodium channel (ENaC), composed of a delta (SCNN1D), beta (SCNN1B), and gamma (SCNN1G) subunit, where the delta (SCNN1D) subunit replaces the alpha (SCNN1A) subunit. Not specifically expressed in epithelial cells.

The protein resides in the apical cell membrane. The enzyme catalyses Na(+)(in) = Na(+)(out). Originally identified and characterized by its inhibition by the diuretic drug amiloride. In terms of biological role, potential alternative pore-forming subunit of the epithelial sodium channel (ENaC), capable of replacing the alpha/SCNN1A subunit, creating a more active channel with distinct properties. ENaC functions in epithelial tissues, where it facilitates the electrodiffusion of sodium ions from the extracellular fluid through the apical membrane of cells, with water following osmotically, regulating sodium balance and fluid homeostasis. This subunit could also function independently as a sodium channel or assemble into other tissue-specific heterotrimeric sodium channels. ENaC channels including this isoform exhibit greater conductance. The chain is Epithelial sodium channel subunit delta from Homo sapiens (Human).